We begin with the raw amino-acid sequence, 962 residues long: Glycine dehydrogenase (decarboxylating) (962 aa).

Position 709 is an N6-(pyridoxal phosphate)lysine (lysine 709).

This sequence belongs to the GcvP family. In terms of assembly, the glycine cleavage system is composed of four proteins: P, T, L and H. Pyridoxal 5'-phosphate is required as a cofactor.

It carries out the reaction N(6)-[(R)-lipoyl]-L-lysyl-[glycine-cleavage complex H protein] + glycine + H(+) = N(6)-[(R)-S(8)-aminomethyldihydrolipoyl]-L-lysyl-[glycine-cleavage complex H protein] + CO2. Functionally, the glycine cleavage system catalyzes the degradation of glycine. The P protein binds the alpha-amino group of glycine through its pyridoxal phosphate cofactor; CO(2) is released and the remaining methylamine moiety is then transferred to the lipoamide cofactor of the H protein. This is Glycine dehydrogenase (decarboxylating) from Shewanella putrefaciens (strain CN-32 / ATCC BAA-453).